The primary structure comprises 448 residues: 26S proteasome regulatory subunit 4 homolog (448 aa).

Over residues 1 to 16 (MGQGTPGGMGKQGGAP) the composition is skewed to gly residues. Disordered regions lie at residues 1–56 (MGQG…AAAR) and 93–112 (LRPT…DLRG). 2 stretches are compositionally biased toward basic and acidic residues: residues 17–33 (GDRK…RKFE) and 93–111 (LRPT…DDLR). 234 to 241 (GEPGTGKT) is an ATP binding site.

Belongs to the AAA ATPase family.

It localises to the cytoplasm. The protein localises to the nucleus. In terms of biological role, the 26S proteasome is involved in the ATP-dependent degradation of ubiquitinated proteins. The regulatory (or ATPase) complex confers ATP dependency and substrate specificity to the 26S complex. The chain is 26S proteasome regulatory subunit 4 homolog (TBP2) from Oryza sativa subsp. japonica (Rice).